Here is a 343-residue protein sequence, read N- to C-terminus: MGEYIMEKNTIILGIETSCDETAVAVVKNGTEIIANVVASQIESHKRFGGVVPEIASRHHVEEITVVLEEALKEANITFDDIDAIAVTEGPGLVGALLIGVNAAKAVAFAHDIPLVGVHHIAGHIYANRLVKEVQFPLLSLVVSGGHTELVYMKEHGSFEVIGETRDDAAGEAYDKVARTLSMPYPGGPHIDRLAHEGEPTIDLPRAWLEPDSYDFSFSGLKSAVINTVHNAKQRGIEIAPEDLAASFQESVIDVLVTKASRAADAYNVKQVLLAGGVAANKGLRARLEAEFAQKENVELIIPPLSLCTDNAAMIAAAGTIAYEQGKRATLALNANPGLDIEA.

The Fe cation site is built by His120 and His124. Substrate is bound by residues 142–146, Asp175, Gly188, Asp192, and Asn281; that span reads VVSGG. Fe cation is bound at residue Asp310.

This sequence belongs to the KAE1 / TsaD family. The cofactor is Fe(2+).

It is found in the cytoplasm. It carries out the reaction L-threonylcarbamoyladenylate + adenosine(37) in tRNA = N(6)-L-threonylcarbamoyladenosine(37) in tRNA + AMP + H(+). Required for the formation of a threonylcarbamoyl group on adenosine at position 37 (t(6)A37) in tRNAs that read codons beginning with adenine. Is involved in the transfer of the threonylcarbamoyl moiety of threonylcarbamoyl-AMP (TC-AMP) to the N6 group of A37, together with TsaE and TsaB. TsaD likely plays a direct catalytic role in this reaction. The protein is tRNA N6-adenosine threonylcarbamoyltransferase of Bacillus cereus (strain ATCC 10987 / NRS 248).